We begin with the raw amino-acid sequence, 287 residues long: DegV domain-containing protein DR_0500 (287 aa).

The DegV domain maps to F7–P280. 2 residues coordinate hexadecanoate: S62 and S93.

May bind long-chain fatty acids, such as palmitate, and may play a role in lipid transport or fatty acid metabolism. This is DegV domain-containing protein DR_0500 from Deinococcus radiodurans (strain ATCC 13939 / DSM 20539 / JCM 16871 / CCUG 27074 / LMG 4051 / NBRC 15346 / NCIMB 9279 / VKM B-1422 / R1).